A 229-amino-acid chain; its full sequence is Large ribosomal subunit protein uL1 (229 aa).

Belongs to the universal ribosomal protein uL1 family. As to quaternary structure, part of the 50S ribosomal subunit.

Functionally, binds directly to 23S rRNA. The L1 stalk is quite mobile in the ribosome, and is involved in E site tRNA release. Its function is as follows. Protein L1 is also a translational repressor protein, it controls the translation of the L11 operon by binding to its mRNA. The sequence is that of Large ribosomal subunit protein uL1 from Caulobacter sp. (strain K31).